The following is a 349-amino-acid chain: Inositol 2-dehydrogenase (349 aa).

Belongs to the Gfo/Idh/MocA family. Homotetramer.

The catalysed reaction is myo-inositol + NAD(+) = scyllo-inosose + NADH + H(+). In terms of biological role, involved in the oxidation of myo-inositol (MI) to 2-keto-myo-inositol (2KMI or 2-inosose). The protein is Inositol 2-dehydrogenase of Mycolicibacterium gilvum (strain PYR-GCK) (Mycobacterium gilvum (strain PYR-GCK)).